Here is a 417-residue protein sequence, read N- to C-terminus: Phosphoglycerate kinase (417 aa).

The (2R)-3-phosphoglycerate site is built by valine 23, aspartate 24, phenylalanine 25, asparagine 26, glutamine 38, arginine 39, serine 62, histidine 63, glycine 65, arginine 66, leucine 121, arginine 122, histidine 169, and arginine 170. Glycine 213 provides a ligand contact to ADP. Glycine 213 contacts CDP. Residues alanine 214 and lysine 215 each contribute to the AMP site. Alanine 214 serves as a coordination point for ATP. Alanine 214 serves as a coordination point for Mg(2+). Aspartate 218 is a binding site for CDP. Aspartate 218 lines the Mg(2+) pocket. Position 219 (lysine 219) interacts with AMP. Lysine 219 is an ATP binding site. Residue glycine 237 coordinates ADP. CDP is bound at residue glycine 237. Residues glycine 238 and glycine 312 each coordinate AMP. Residues glycine 238 and glycine 312 each coordinate ATP. Residues glycine 337 and phenylalanine 342 each contribute to the CDP site. Phenylalanine 342 lines the ADP pocket. An AMP-binding site is contributed by glutamate 343. ATP contacts are provided by glutamate 343, aspartate 374, and threonine 375. Aspartate 374 is a Mg(2+) binding site.

This sequence belongs to the phosphoglycerate kinase family. In terms of assembly, monomer. Requires Mg(2+) as cofactor.

Its subcellular location is the cytoplasm. The protein localises to the mitochondrion. It catalyses the reaction (2R)-3-phosphoglycerate + ATP = (2R)-3-phospho-glyceroyl phosphate + ADP. Its pathway is carbohydrate degradation; glycolysis; pyruvate from D-glyceraldehyde 3-phosphate: step 2/5. In terms of biological role, catalyzes one of the two ATP producing reactions in the glycolytic pathway via the reversible conversion of 1,3-diphosphoglycerate to 3-phosphoglycerate. Both L- and D- forms of purine and pyrimidine nucleotides can be used as substrates, but the activity is much lower on pyrimidines. Negatively regulates the biosynthesis of acetyl-CoA from pyruvate in the mitochondrion. In Candida maltosa (Yeast), this protein is Phosphoglycerate kinase (PGK1).